The following is a 235-amino-acid chain: 1-Cys peroxiredoxin (235 aa).

In terms of domain architecture, Thioredoxin spans 5–179; sequence ILLGDKFPDF…ILRVVDSLQL (175 aa). Cysteine 49 is a catalytic residue. Cysteine 49 (cysteine sulfenic acid (-SOH) intermediate) is an active-site residue.

This sequence belongs to the peroxiredoxin family. Prx6 subfamily.

Its subcellular location is the cytoplasm. The catalysed reaction is a hydroperoxide + [protein]-dithiol = [protein]-disulfide + an alcohol + H2O. Functionally, thiol-specific peroxidase that catalyzes the reduction of hydrogen peroxide and organic hydroperoxides to water and alcohols, respectively. Plays a role in cell protection against oxidative stress by detoxifying peroxides. The sequence is that of 1-Cys peroxiredoxin from Dirofilaria immitis (Canine heartworm).